Consider the following 154-residue polypeptide: 6,7-dimethyl-8-ribityllumazine synthase (154 aa).

5-amino-6-(D-ribitylamino)uracil-binding positions include Phe22, 56 to 58 (AFE), and 80 to 82 (AVI). 85–86 (AT) is a binding site for (2S)-2-hydroxy-3-oxobutyl phosphate. The Proton donor role is filled by His88. Phe113 contacts 5-amino-6-(D-ribitylamino)uracil. (2S)-2-hydroxy-3-oxobutyl phosphate is bound at residue Arg127.

This sequence belongs to the DMRL synthase family.

It catalyses the reaction (2S)-2-hydroxy-3-oxobutyl phosphate + 5-amino-6-(D-ribitylamino)uracil = 6,7-dimethyl-8-(1-D-ribityl)lumazine + phosphate + 2 H2O + H(+). Its pathway is cofactor biosynthesis; riboflavin biosynthesis; riboflavin from 2-hydroxy-3-oxobutyl phosphate and 5-amino-6-(D-ribitylamino)uracil: step 1/2. Functionally, catalyzes the formation of 6,7-dimethyl-8-ribityllumazine by condensation of 5-amino-6-(D-ribitylamino)uracil with 3,4-dihydroxy-2-butanone 4-phosphate. This is the penultimate step in the biosynthesis of riboflavin. This Clostridium botulinum (strain ATCC 19397 / Type A) protein is 6,7-dimethyl-8-ribityllumazine synthase.